We begin with the raw amino-acid sequence, 118 residues long: Large ribosomal subunit protein bL17 (118 aa).

This sequence belongs to the bacterial ribosomal protein bL17 family. As to quaternary structure, part of the 50S ribosomal subunit. Contacts protein L32.

The sequence is that of Large ribosomal subunit protein bL17 from Thermus thermophilus (strain ATCC BAA-163 / DSM 7039 / HB27).